The primary structure comprises 491 residues: Glycogen synthase 1 (491 aa).

An ADP-alpha-D-glucose-binding site is contributed by K15.

Belongs to the glycosyltransferase 1 family. Bacterial/plant glycogen synthase subfamily.

The enzyme catalyses [(1-&gt;4)-alpha-D-glucosyl](n) + ADP-alpha-D-glucose = [(1-&gt;4)-alpha-D-glucosyl](n+1) + ADP + H(+). It participates in glycan biosynthesis; glycogen biosynthesis. Functionally, synthesizes alpha-1,4-glucan chains using ADP-glucose. This chain is Glycogen synthase 1, found in Synechococcus sp. (strain JA-2-3B'a(2-13)) (Cyanobacteria bacterium Yellowstone B-Prime).